We begin with the raw amino-acid sequence, 378 residues long: DNA replication and repair protein RecF (378 aa).

Gly30 to Thr37 provides a ligand contact to ATP.

Belongs to the RecF family.

Its subcellular location is the cytoplasm. The RecF protein is involved in DNA metabolism; it is required for DNA replication and normal SOS inducibility. RecF binds preferentially to single-stranded, linear DNA. It also seems to bind ATP. The sequence is that of DNA replication and repair protein RecF from Frankia alni (strain DSM 45986 / CECT 9034 / ACN14a).